A 347-amino-acid chain; its full sequence is Hyaluronidase conohyal-ad1 (347 aa).

The signal sequence occupies residues 1–18 (MRAVVVVTGLVVVVVTTT). A propeptide spanning residues 19 to 33 (LSLQDHDVKSASSPL) is cleaved from the precursor. Residues 27 to 49 (KSASSPLSSSVDQGSSGDDCDEG) form a disordered region. Over residues 28-43 (SASSPLSSSVDQGSSG) the composition is skewed to low complexity. A disulfide bond links C67 and C343. E150 acts as the Proton donor in catalysis.

Belongs to the glycosyl hydrolase 56 family. In terms of processing, contains 4 disulfide bonds. Is N-linked glycosylated at three positions. In terms of tissue distribution, expressed by the venom duct.

It localises to the secreted. It catalyses the reaction Random hydrolysis of (1-&gt;4)-linkages between N-acetyl-beta-D-glucosamine and D-glucuronate residues in hyaluronate.. Hyaluronidase catalyzes the hydrolysis of hyaluronic acid (HA), an anionic, nonsulfated glycosaminoglycan distributed widely throughout connective, epithelial, and neural tissues. In venom, they are known to enhance diffusion of the venom by degrading the extracellular matrix. The sequence is that of Hyaluronidase conohyal-ad1 from Conus adamsonii (Rhododendron cone).